Reading from the N-terminus, the 544-residue chain is Chaperonin GroEL (544 aa).

Residues 29 to 32 (TLGP), lysine 50, 86 to 90 (DGTTT), glycine 413, 479 to 481 (DAA), and aspartate 495 each bind ATP.

The protein belongs to the chaperonin (HSP60) family. Forms a cylinder of 14 subunits composed of two heptameric rings stacked back-to-back. Interacts with the co-chaperonin GroES.

The protein localises to the cytoplasm. The catalysed reaction is ATP + H2O + a folded polypeptide = ADP + phosphate + an unfolded polypeptide.. Together with its co-chaperonin GroES, plays an essential role in assisting protein folding. The GroEL-GroES system forms a nano-cage that allows encapsulation of the non-native substrate proteins and provides a physical environment optimized to promote and accelerate protein folding. The protein is Chaperonin GroEL of Borrelia turicatae (strain 91E135).